Here is a 183-residue protein sequence, read N- to C-terminus: MTEMKILIVTLTYIEKSIIDEIVNNLSSYGLEVDILFDSRKYLPISAFNWERLQYDAEKVLSFLKSKYDFNYDSIIFLADSDGYIDGYNFVFGLTIDNFAIIFLNRLREEFYNRKPDLELFMKRVVKEVTHEAGHILGLGHCNTIGCVMNFSNTVEDVDKKQARFCKNCIYKIENLSKYLQRK.

His131 contributes to the Zn(2+) binding site. The active-site Proton acceptor is Glu132. 6 residues coordinate Zn(2+): His135, His141, Cys142, Cys147, Cys166, and Cys169.

It belongs to the peptidase M54 family. As to quaternary structure, monomer. Zn(2+) serves as cofactor.

Probable zinc metalloprotease whose natural substrate is unknown. In Saccharolobus islandicus (strain Y.N.15.51 / Yellowstone #2) (Sulfolobus islandicus), this protein is Archaemetzincin.